The following is a 241-amino-acid chain: Phosphatidylcholine synthase (241 aa).

Over Met1–Arg15 the chain is Cytoplasmic. The helical transmembrane segment at Ala16–Ala36 threads the bilayer. Topologically, residues Ala37–Arg41 are periplasmic. A helical transmembrane segment spans residues Phe42–Ile62. Residues Ala63–Ser76 are Cytoplasmic-facing. Residues Gly77–Leu97 form a helical membrane-spanning segment. At Tyr98 to Ser100 the chain is on the periplasmic side. A helical transmembrane segment spans residues Gly101 to Ile121. The Cytoplasmic portion of the chain corresponds to Tyr122–Tyr133. A helical transmembrane segment spans residues Phe134–Ala154. Topologically, residues Ser155–Ala159 are periplasmic. A helical transmembrane segment spans residues Met160 to Val180. The Cytoplasmic portion of the chain corresponds to Arg181–Pro187. A helical transmembrane segment spans residues Leu188–Phe208. Topologically, residues Glu209–Ala214 are periplasmic. A helical membrane pass occupies residues Val215–Phe235. Topologically, residues Pro236–Lys241 are cytoplasmic.

The protein belongs to the CDP-alcohol phosphatidyltransferase class-I family. Requires Mn(2+) as cofactor.

The protein localises to the cell inner membrane. The catalysed reaction is a CDP-1,2-diacyl-sn-glycerol + choline = a 1,2-diacyl-sn-glycero-3-phosphocholine + CMP + H(+). In terms of biological role, condenses choline with CDP-diglyceride to produce phosphatidylcholine and CMP. Affects motility, biofilm formation and virulence of this bacterium when there is a complete loss of phosphatidylcholine formation due to absence of both the synthase (pcs) and the methylation (pmtA) pathways. This is Phosphatidylcholine synthase from Agrobacterium fabrum (strain C58 / ATCC 33970) (Agrobacterium tumefaciens (strain C58)).